Consider the following 157-residue polypeptide: SsrA-binding protein (157 aa).

The interval lysine 131 to glycine 157 is disordered. Residues glutamine 132–arginine 151 show a composition bias toward basic and acidic residues.

The protein belongs to the SmpB family.

It is found in the cytoplasm. Required for rescue of stalled ribosomes mediated by trans-translation. Binds to transfer-messenger RNA (tmRNA), required for stable association of tmRNA with ribosomes. tmRNA and SmpB together mimic tRNA shape, replacing the anticodon stem-loop with SmpB. tmRNA is encoded by the ssrA gene; the 2 termini fold to resemble tRNA(Ala) and it encodes a 'tag peptide', a short internal open reading frame. During trans-translation Ala-aminoacylated tmRNA acts like a tRNA, entering the A-site of stalled ribosomes, displacing the stalled mRNA. The ribosome then switches to translate the ORF on the tmRNA; the nascent peptide is terminated with the 'tag peptide' encoded by the tmRNA and targeted for degradation. The ribosome is freed to recommence translation, which seems to be the essential function of trans-translation. This Rhodopseudomonas palustris (strain BisB18) protein is SsrA-binding protein.